A 329-amino-acid chain; its full sequence is Calponin-3 (329 aa).

Position 23 is an N6-acetyllysine (lysine 23). Positions 26–130 constitute a Calponin-homology (CH) domain; sequence HQAEEDLRNW…TLVALAGLAK (105 aa). Lysine 158 is modified (N6-methyllysine). 3 Calponin-like repeats span residues 164 to 189, 204 to 229, and 243 to 268; these read IGLQ…RHLY, ISLQ…RDIY, and ISLQ…RQVY. Residues 280-329 form a disordered region; sequence VIHNGSQGTGTNGSEISDSDYQAEYPDEYHGEYQDDYPRDYQYGDQGIDY. The span at 306-318 shows a compositional bias: basic and acidic residues; that stretch reads DEYHGEYQDDYPR.

This sequence belongs to the calponin family.

Its function is as follows. Thin filament-associated protein that is implicated in the regulation and modulation of smooth muscle contraction. It is capable of binding to actin, calmodulin and tropomyosin. The interaction of calponin with actin inhibits the actomyosin Mg-ATPase activity. This Bos taurus (Bovine) protein is Calponin-3 (CNN3).